A 2003-amino-acid polypeptide reads, in one-letter code: Histone acetyltransferase KAT6A (2003 aa).

The 77-residue stretch at methionine 1 to proline 77 folds into the SAMD1-like winged helix (WH) domain. Positions methionine 1 to histidine 144 are required for activation of RUNX1-1. Residues glutamate 52–leucine 166 form a required for nuclear localization region. Positions glutamine 95–threonine 171 constitute an H15 domain. The segment at histidine 144–aspartate 663 is interaction with PML. At lysine 172 the chain carries N6-acetyllysine. PHD-type zinc fingers lie at residues isoleucine 206–cysteine 265 and cysteine 262–arginine 313. Positions proline 312 to aspartate 663 are interaction with RUNX1-1. Residues glycine 336–serine 377 are disordered. N6-acetyllysine is present on residues lysine 350 and lysine 355. Threonine 369 is subject to Phosphothreonine; by PKB/AKT1. The residue at position 419 (serine 419) is a Phosphoserine. Positions arginine 439–glutamate 466 are disordered. Residues lysine 445–glycine 458 show a composition bias toward polar residues. Residue serine 472 is modified to Phosphoserine. A catalytic region spans residues isoleucine 487–proline 777. Positions proline 503–proline 777 constitute an MYST-type HAT domain. Residues arginine 506–glutamate 809 are mediates interaction with BRPF1, required for histone H3 acetyltransferase activity. Residues leucine 536–tryptophan 561 form a C2HC MYST-type zinc finger. Residue lysine 603 is modified to N6-acetyllysine; by autocatalysis. Acetyl-CoA-binding positions include serine 644–isoleucine 648 and glutamine 653–arginine 659. Glutamate 679 functions as the Proton donor/acceptor in the catalytic mechanism. Serine 683 is an acetyl-CoA binding site. The disordered stretch occupies residues valine 784–arginine 939. Phosphoserine is present on serine 786. Acidic residues predominate over residues serine 786–lysine 798. Positions glutamate 799 to glutamate 841 are enriched in basic and acidic residues. 2 positions are modified to N6-acetyllysine: lysine 813 and lysine 816. Residue lysine 836 forms a Glycyl lysine isopeptide (Lys-Gly) (interchain with G-Cter in SUMO2) linkage. Positions arginine 866–arginine 875 are enriched in basic residues. A compositionally biased stretch (basic and acidic residues) spans lysine 876–valine 890. Position 901 is a phosphotyrosine (tyrosine 901). Positions cysteine 904–glutamate 917 are enriched in basic and acidic residues. Serine 941 and serine 954 each carry phosphoserine. Residues glycine 983–arginine 1083 form a disordered region. Lysine 1007 carries the N6-acetyllysine modification. Positions threonine 1009–asparagine 1030 are enriched in basic residues. Residues serine 1031–threonine 1042 are compositionally biased toward low complexity. 2 stretches are compositionally biased toward acidic residues: residues glutamate 1043–aspartate 1053 and phenylalanine 1065–glutamate 1079. Residues serine 1090, serine 1091, and serine 1115 each carry the phosphoserine modification. 5 disordered regions span residues arginine 1096–glycine 1174, isoleucine 1197–glutamine 1438, histidine 1455–serine 1533, aspartate 1546–glycine 1568, and threonine 1631–asparagine 1707. A compositionally biased stretch (acidic residues) spans glutamate 1107 to aspartate 1120. Residues asparagine 1136–proline 1147 show a composition bias toward polar residues. The segment covering methionine 1148 to glycine 1174 has biased composition (basic residues). Positions arginine 1204–glutamate 1229 are enriched in basic and acidic residues. Composition is skewed to acidic residues over residues proline 1230 to threonine 1241 and glutamate 1282 to threonine 1299. Residues histidine 1317–aspartate 1334 show a composition bias toward basic and acidic residues. Lysine 1336 participates in a covalent cross-link: Glycyl lysine isopeptide (Lys-Gly) (interchain with G-Cter in SUMO2). Composition is skewed to basic and acidic residues over residues aspartate 1352–aspartate 1361 and aspartate 1393–leucine 1414. Low complexity predominate over residues histidine 1473–serine 1490. 2 stretches are compositionally biased toward polar residues: residues glycine 1502 to threonine 1523 and isoleucine 1550 to glycine 1568. The segment at glycine 1511–arginine 1636 is interaction with RUNX1-2. An interaction with PML region spans residues glycine 1511–alanine 1740. Pro residues-rich tracts occupy residues asparagine 1640 to proline 1673 and glutamine 1682 to glutamine 1698. The required for activation of RUNX1-2 stretch occupies residues serine 1912 to glutamine 1947.

This sequence belongs to the MYST (SAS/MOZ) family. As to quaternary structure, component of the MOZ/MORF complex composed at least of ING5, KAT6A, KAT6B, MEAF6 and one of BRPF1, BRD1/BRPF2 and BRPF3. Interacts with RUNX2. Interacts with RUNX1; phosphorylation of RUNX1 enhances the interaction. Interacts with p53/TP53. Interacts with PML and this interaction positively regulates its acetylation activity towards p53/TP53. Post-translationally, autoacetylated. Autoacetylation at Lys-603 is required for proper function. Phosphorylation at Thr-369 by PKB/AKT1 inhibits its interaction with PML and negatively regulates its acetylation activity towards p53/TP53.

It localises to the nucleus. The protein resides in the nucleolus. It is found in the nucleoplasm. Its subcellular location is the PML body. It carries out the reaction L-lysyl-[protein] + acetyl-CoA = N(6)-acetyl-L-lysyl-[protein] + CoA + H(+). Histone acetyltransferase that acetylates lysine residues in histone H3 and histone H4 (in vitro). Component of the MOZ/MORF complex which has a histone H3 acetyltransferase activity. May act as a transcriptional coactivator for RUNX1 and RUNX2. Acetylates p53/TP53 at 'Lys-120' and 'Lys-382' and controls its transcriptional activity via association with PML. The polypeptide is Histone acetyltransferase KAT6A (Kat6a) (Mus musculus (Mouse)).